Reading from the N-terminus, the 291-residue chain is uncharacterized protein (291 aa).

Residues 191–289 (KQMLNWIHLH…NMTPLSYKKM (99 aa)) form the HTH araC/xylS-type domain. 2 consecutive DNA-binding regions (H-T-H motif) follow at residues 208 to 229 (EDIA…KRML) and 256 to 279 (VTEV…QQAM).

This is an uncharacterized protein from Bacillus subtilis (strain 168).